The following is a 680-amino-acid chain: TBC1 domain family member 23 (680 aa).

Positions 40 to 221 (DLSPPQRAKL…ALWDVYLQQA (182 aa)) constitute a Rab-GAP TBC domain. The region spanning 330–442 (EGVRFFVVDC…LQQHLADINV (113 aa)) is the Rhodanese domain.

Its subcellular location is the golgi apparatus. The protein resides in the trans-Golgi network. It is found in the cytoplasmic vesicle. Putative Rab GTPase-activating protein which plays a role in vesicular trafficking. Involved in endosome-to-Golgi trafficking. Acts as a bridging protein by binding simultaneously to golgins, located at the trans-Golgi, and to the WASH complex, located on endosome-derived vesicles. Plays a role in brain development. May act as a general inhibitor of innate immunity signaling. In Danio rerio (Zebrafish), this protein is TBC1 domain family member 23 (tbc1d23).